We begin with the raw amino-acid sequence, 328 residues long: tRNA uridine(34) hydroxylase (328 aa).

The Rhodanese domain occupies Leu130–Glu224. Cys184 functions as the Cysteine persulfide intermediate in the catalytic mechanism.

The protein belongs to the TrhO family.

The enzyme catalyses uridine(34) in tRNA + AH2 + O2 = 5-hydroxyuridine(34) in tRNA + A + H2O. Catalyzes oxygen-dependent 5-hydroxyuridine (ho5U) modification at position 34 in tRNAs. The chain is tRNA uridine(34) hydroxylase from Streptococcus pneumoniae (strain Hungary19A-6).